We begin with the raw amino-acid sequence, 271 residues long: Formamidopyrimidine-DNA glycosylase (271 aa).

P2 (schiff-base intermediate with DNA) is an active-site residue. Residue E3 is the Proton donor of the active site. The active-site Proton donor; for beta-elimination activity is K56. Positions 89, 107, and 151 each coordinate DNA. The FPG-type zinc-finger motif lies at 236–270; that stretch reads MVYDRAGLPCRVCAAPIKSIRQGQRSSFYCATCQK. Residue R260 is the Proton donor; for delta-elimination activity of the active site.

It belongs to the FPG family. As to quaternary structure, monomer. It depends on Zn(2+) as a cofactor.

It catalyses the reaction Hydrolysis of DNA containing ring-opened 7-methylguanine residues, releasing 2,6-diamino-4-hydroxy-5-(N-methyl)formamidopyrimidine.. The catalysed reaction is 2'-deoxyribonucleotide-(2'-deoxyribose 5'-phosphate)-2'-deoxyribonucleotide-DNA = a 3'-end 2'-deoxyribonucleotide-(2,3-dehydro-2,3-deoxyribose 5'-phosphate)-DNA + a 5'-end 5'-phospho-2'-deoxyribonucleoside-DNA + H(+). Functionally, involved in base excision repair of DNA damaged by oxidation or by mutagenic agents. Acts as a DNA glycosylase that recognizes and removes damaged bases. Has a preference for oxidized purines, such as 7,8-dihydro-8-oxoguanine (8-oxoG). Has AP (apurinic/apyrimidinic) lyase activity and introduces nicks in the DNA strand. Cleaves the DNA backbone by beta-delta elimination to generate a single-strand break at the site of the removed base with both 3'- and 5'-phosphates. The chain is Formamidopyrimidine-DNA glycosylase from Polaromonas naphthalenivorans (strain CJ2).